Reading from the N-terminus, the 436-residue chain is F-box/LRR-repeat protein At2g40920 (436 aa).

The region spanning 48-98 (EYLLQNFDLDHVMEILMRFPLTSLTRFKCVSKQWSSLISSRYFCNLLYTTV) is the F-box domain. LRR repeat units follow at residues 276-301 (NCVV…IHLD) and 393-416 (YYNL…WFDK).

In Arabidopsis thaliana (Mouse-ear cress), this protein is F-box/LRR-repeat protein At2g40920.